The following is an 834-amino-acid chain: MTGELTRREMLKAHAAGIAAATAGIALPAAAQPVPGGVEALQITWSKAPCRFCGTGCGVMVGVKEGQVVATHGDMQAEVNRGLNCIKGYFLSKIMYGTDRLKTPLLRKRNGAFAKDGEFEPVSWDEAFDVMAEQAKKVLKDKGPTAVGMFGSGQWTIFEGYAATKLMRAGFRSNNLDPNARHCMASAAYAFMRTFGMDEPMGCYDDFEHADAFVLWGSNMAEMHPILWTRLADRRLGHEHVKVAVLSTFTHRSMDLADIPIVFKPGTDLAILNYIANHIIQTGRVNEDFVRKHTTFMVGATDIGYGLRPDNPLEVKAVNAKDAAKMTPSDFESFKSFVSEYTLDKVVELTGVEAGFLEQLADLYADPKRKVMSLWTMGFNQHVRGVWVNQMVYNLHLLTGKISEPGNSPFSLTGQPSACGTAREVGTFAHRLPADMTVTNPEHRKHAEEIWRIPHGIIPEKPGYHAVEQDRMLKDGKLNFYWVQVNNNVQAAPNTQNETYQGYRNPDNFIVVSDVYPTITAMSADLILPAAMWVEKEGAYGNAERRTHVWHQLVDAPGEARSDLWQMVEFSKRFTTDEVWSTDILDANPGYRGKTLYDVLFKNGNVDSFPASEINKEYANREAEAFGFYIQKGLFEEYASFGRGHGHDLAPYDRYHDERGLRWPVVDGKETLWRYREGYDPYVKPGEGVKFYGRPDGKAVILAVPYEPPAESPDDEYNVWLVTGRVLEHWHSGSMTMRVPELYKAFPGAVCFMNAGDARDRGINQGAEVRIVSRRGEIRARVETRGRNRMPPGVIFVPWFDASRLINKVTLDATDPISKQTDFKKCAVKIVSVA.

The tat-type signal signal peptide spans 1-31 (MTGELTRREMLKAHAAGIAAATAGIALPAAA). Residues 43-99 (ITWSKAPCRFCGTGCGVMVGVKEGQVVATHGDMQAEVNRGLNCIKGYFLSKIMYGTD) form the 4Fe-4S Mo/W bis-MGD-type domain. [4Fe-4S] cluster contacts are provided by Cys50, Cys53, Cys57, and Cys85. Mo-bis(molybdopterin guanine dinucleotide) is bound by residues Lys87, Gln154, Asn179, Cys183, 216–223 (WGSNMAEM), 247–251 (STFTH), 266–268 (GTD), Met377, Gln381, Asn487, 513–514 (SD), Lys536, Asp563, and 723–732 (TGRVLEHWHS). Trp799 lines the substrate pocket. Mo-bis(molybdopterin guanine dinucleotide)-binding residues include Asn807 and Lys824.

This sequence belongs to the prokaryotic molybdopterin-containing oxidoreductase family. NasA/NapA/NarB subfamily. In terms of assembly, component of the periplasmic nitrate reductase NapAB complex composed of NapA and NapB. The cofactor is [4Fe-4S] cluster. Mo-bis(molybdopterin guanine dinucleotide) serves as cofactor. In terms of processing, predicted to be exported by the Tat system. The position of the signal peptide cleavage has not been experimentally proven.

Its subcellular location is the periplasm. The enzyme catalyses 2 Fe(II)-[cytochrome] + nitrate + 2 H(+) = 2 Fe(III)-[cytochrome] + nitrite + H2O. In terms of biological role, catalytic subunit of the periplasmic nitrate reductase complex NapAB. Receives electrons from NapB and catalyzes the reduction of nitrate to nitrite. This chain is Periplasmic nitrate reductase, found in Rhizobium meliloti (strain 1021) (Ensifer meliloti).